Reading from the N-terminus, the 299-residue chain is 4-diphosphocytidyl-2-C-methyl-D-erythritol kinase (299 aa).

The active site involves lysine 11. 94-104 (PQGGGLGGGSS) serves as a coordination point for ATP. Aspartate 136 is a catalytic residue.

This sequence belongs to the GHMP kinase family. IspE subfamily.

The enzyme catalyses 4-CDP-2-C-methyl-D-erythritol + ATP = 4-CDP-2-C-methyl-D-erythritol 2-phosphate + ADP + H(+). Its pathway is isoprenoid biosynthesis; isopentenyl diphosphate biosynthesis via DXP pathway; isopentenyl diphosphate from 1-deoxy-D-xylulose 5-phosphate: step 3/6. Functionally, catalyzes the phosphorylation of the position 2 hydroxy group of 4-diphosphocytidyl-2C-methyl-D-erythritol. The polypeptide is 4-diphosphocytidyl-2-C-methyl-D-erythritol kinase (Bordetella pertussis (strain Tohama I / ATCC BAA-589 / NCTC 13251)).